The following is a 750-amino-acid chain: Iron-sulfur clusters transporter ATM1, mitochondrial (750 aa).

Residues 1–16 (MFIRNVKLIKPSPVRF) constitute a mitochondrion transit peptide. At 17-124 (ISPIPFSFPI…PKNNLNFKIR (108 aa)) the chain is on the mitochondrial matrix side. Low complexity-rich tracts occupy residues 43–75 (TSNF…KTLS) and 87–100 (DNDT…SSEN). A disordered region spans residues 43-100 (TSNFKSTSSSSSLKSTSTSTSTSTSKTTPKTLSKPPPKVKPPIQDNDTTSSGSSSSEN). Residues 125–146 (VIIALSLLVGAKILNVQVPFYF) form a helical membrane-spanning segment. The ABC transmembrane type-1 domain maps to 125–415 (VIIALSLLVG…LGSVYRELKQ (291 aa)). The Mitochondrial intermembrane portion of the chain corresponds to 147 to 169 (KQIIDTMNIDWTNEVGVFSTVIG). Residues 170-193 (SLILAYGGARFGAVLFGELRNAIF) traverse the membrane as a helical segment. Residues 194-242 (ASVAQSAIRRVAYNTFVKLLNMDLQFHLSRQTGGLTRAIDRGTKGISYV) lie on the Mitochondrial matrix side of the membrane. A helical membrane pass occupies residues 243 to 266 (LSAMVFHIIPITLEISIVCGILTY). Position 267 (N267) is a topological domain, mitochondrial intermembrane. A helical membrane pass occupies residues 268–288 (YGASFAAMTFVTMLAYSIFTI). At 289–354 (QTTAWRTKFR…SSVKIATSLA (66 aa)) the chain is on the mitochondrial matrix side. Residues 294–298 (RTKFR) and 357–360 (NSGQ) each bind glutathione. The chain crosses the membrane as a helical span at residues 355 to 373 (FLNSGQNFIFTSALTAMMY). At 374-388 (MGCQGVYTGELTVGD) the chain is on the mitochondrial intermembrane side. The helical transmembrane segment at 389 to 410 (LVLINQLVFQLSVPLNFLGSVY) threads the bilayer. G407 serves as a coordination point for glutathione. Residues 411–750 (RELKQSLLDM…LFNSQTFEKK (340 aa)) are Mitochondrial matrix-facing. Positions 437–462 (PNAPPLKLNNNNNNNNNNNNNNNNSL) are disordered. Low complexity predominate over residues 445–460 (NNNNNNNNNNNNNNNN). Positions 466-702 (IRFENVSFGY…QPNSLYAQLW (237 aa)) constitute an ABC transporter domain. ATP is bound by residues Y475 and 499-510 (GPSGSGKSTILR).

It belongs to the ABC transporter superfamily. ABCB family. Heavy Metal importer (TC 3.A.1.210) subfamily. As to quaternary structure, homodimer.

It is found in the mitochondrion inner membrane. Functionally, performs an essential function in the generation of cytoplasmic iron-sulfur proteins by mediating the ATP-dependent export of Fe/S cluster precursors synthesized by NFS1 and other mitochondrial proteins. Hydrolyzes ATP. Binds glutathione and may function by transporting a glutathione-conjugated iron-sulfur compound. In Candida albicans (strain SC5314 / ATCC MYA-2876) (Yeast), this protein is Iron-sulfur clusters transporter ATM1, mitochondrial.